Reading from the N-terminus, the 205-residue chain is N-(5'-phosphoribosyl)anthranilate isomerase (205 aa).

Belongs to the TrpF family.

The enzyme catalyses N-(5-phospho-beta-D-ribosyl)anthranilate = 1-(2-carboxyphenylamino)-1-deoxy-D-ribulose 5-phosphate. The protein operates within amino-acid biosynthesis; L-tryptophan biosynthesis; L-tryptophan from chorismate: step 3/5. The chain is N-(5'-phosphoribosyl)anthranilate isomerase from Marinomonas sp. (strain MWYL1).